The primary structure comprises 145 residues: MELPLGSDLARLVRVWRALVDHRLKPLELTQTHWVTLHNIYHLPPGQSQIQLAKAIGIEQPSLVRTLDQLEEKGLITRHVCAHDRRAKRIMLTESAEPIIQAVDGVISHTRSEVLFGITPEQVDELALLVARLEKNILALHENQA.

An HTH marR-type domain is found at 2–135 (ELPLGSDLAR…LALLVARLEK (134 aa)). The segment at residues 49-72 (QIQLAKAIGIEQPSLVRTLDQLEE) is a DNA-binding region (H-T-H motif).

Belongs to the SlyA family. In terms of assembly, homodimer.

Its function is as follows. Transcription regulator that can specifically activate or repress expression of target genes. In Pectobacterium atrosepticum (strain SCRI 1043 / ATCC BAA-672) (Erwinia carotovora subsp. atroseptica), this protein is Transcriptional regulator SlyA.